A 188-amino-acid chain; its full sequence is dCTP deaminase (188 aa).

DCTP contacts are provided by residues 111–116, 135–137, Gln156, Tyr170, and Gln180; these read KSTYAR and TLE. Glu137 (proton donor/acceptor) is an active-site residue.

The protein belongs to the dCTP deaminase family. In terms of assembly, homotrimer.

The enzyme catalyses dCTP + H2O + H(+) = dUTP + NH4(+). The protein operates within pyrimidine metabolism; dUMP biosynthesis; dUMP from dCTP (dUTP route): step 1/2. Functionally, catalyzes the deamination of dCTP to dUTP. This Cupriavidus metallidurans (strain ATCC 43123 / DSM 2839 / NBRC 102507 / CH34) (Ralstonia metallidurans) protein is dCTP deaminase.